The following is a 276-amino-acid chain: Adenylate kinase (276 aa).

52-57 (GAGKGT) contacts ATP. The NMP stretch occupies residues 72 to 101 (ATGDMLRAQVAAKTPLGREAKKIMDAGGLV). AMP-binding positions include threonine 73, arginine 78, 99 to 101 (GLV), 128 to 131 (GFPR), and glutamine 135. The segment at 169 to 206 (GRLVHPASGRSYHKIFNPPKAPMTDDVTGEPLIQRSDD) is LID. ATP contacts are provided by residues arginine 170 and 179 to 180 (SY). Residues arginine 203 and arginine 214 each contribute to the AMP site. Residue glutamine 242 participates in ATP binding.

This sequence belongs to the adenylate kinase family. AK2 subfamily. Monomer.

The protein localises to the cytoplasm. The protein resides in the cytosol. It is found in the mitochondrion intermembrane space. The enzyme catalyses AMP + ATP = 2 ADP. Functionally, catalyzes the reversible transfer of the terminal phosphate group between ATP and AMP. Plays an important role in cellular energy homeostasis and in adenine nucleotide metabolism. Adenylate kinase activity is critical for regulation of the phosphate utilization and the AMP de novo biosynthesis pathways. This is Adenylate kinase (adk1) from Pyrenophora tritici-repentis (strain Pt-1C-BFP) (Wheat tan spot fungus).